The chain runs to 27 residues: Protein YqiM (27 aa).

The sequence is that of Protein YqiM from Escherichia coli (strain K12).